The following is an 83-amino-acid chain: Mitochondrial import inner membrane translocase subunit Tim8 B (83 aa).

The residue at position 2 (A2) is an N-acetylalanine. The short motif at 36 to 59 is the Twin CX3C motif element; sequence CWDKCVEKPGSRLDSRTENCLSSC. 2 disulfides stabilise this stretch: C36/C59 and C40/C55.

It belongs to the small Tim family. As to quaternary structure, heterohexamer; possibly composed of 3 copies of TIMM8B and 3 copies of TIMM13, named soluble 70 kDa complex. Associates with the TIM22 complex, whose core is composed of TIMM22.

It is found in the mitochondrion inner membrane. In terms of biological role, probable mitochondrial intermembrane chaperone that participates in the import and insertion of some multi-pass transmembrane proteins into the mitochondrial inner membrane. Also required for the transfer of beta-barrel precursors from the TOM complex to the sorting and assembly machinery (SAM complex) of the outer membrane. Acts as a chaperone-like protein that protects the hydrophobic precursors from aggregation and guide them through the mitochondrial intermembrane space. The chain is Mitochondrial import inner membrane translocase subunit Tim8 B (Timm8b) from Mus musculus (Mouse).